Reading from the N-terminus, the 120-residue chain is MIQSKRQQGASFEYQARLFLERQGLTFIAANQRFNCGELDLIMQDQQTIVFVEVRQRKNQIFGSAIDSVDWKKQQKWLDAANLWLAQYDSSLEDADCRFDLVAFGATTNDIQWIPNFLDE.

It belongs to the UPF0102 family.

This chain is UPF0102 protein HSM_1206, found in Histophilus somni (strain 2336) (Haemophilus somnus).